Consider the following 201-residue polypeptide: Kinetochore protein SPC24 homolog (201 aa).

A coiled-coil region spans residues 78–133; that stretch reads DIAAEDEIERLQKELDEEMEREFKLKDELRLVADELKDLNAQLSSIDEHKQSTKRK.

It belongs to the SPC24 family. Component of the NDC80 complex, which consists of NDC80, NUF2, SPC24 and SPC25. As to expression, highly expressed in actively dividing tissues, such as shoot apical meristem (SAM), root apical meristem (RAM), vasculature, newly emerging leaves and inflorescence shoots.

It is found in the chromosome. It localises to the centromere. In terms of biological role, acts as a component of the essential kinetochore-associated NDC80 complex, which is required for chromosome segregation and spindle checkpoint activity to ensure proper cell division. Required for the maintenance of plant architecture. This Arabidopsis thaliana (Mouse-ear cress) protein is Kinetochore protein SPC24 homolog.